The primary structure comprises 853 residues: Probable inorganic carbon transporter subunit DabA (853 aa).

Residues Met-1–Ser-21 are disordered. The segment covering Glu-7–Ser-21 has biased composition (polar residues). Zn(2+)-binding residues include Cys-364, Asp-366, His-546, and Cys-561.

It belongs to the inorganic carbon transporter (TC 9.A.2) DabA family. As to quaternary structure, forms a complex with DabB. Zn(2+) is required as a cofactor.

It is found in the cell inner membrane. Functionally, part of an energy-coupled inorganic carbon pump. In Methylovorus glucosotrophus (strain SIP3-4), this protein is Probable inorganic carbon transporter subunit DabA.